A 236-amino-acid chain; its full sequence is uncharacterized protein (236 aa).

This is an uncharacterized protein from Escherichia coli O157:H7.